A 333-amino-acid polypeptide reads, in one-letter code: MSKQRKLTEADVTPESVFYQRRKVLQALGITAASLALPHNAQADLLSWFKGNDRPKAPPGKPLEFSKPAAWQAQLDLTPEDKVTGYNNFYEFGLDKADPAANAGGLKTEGWQVRIDGEVAKPITLDIDDLIKRFPLEQRIYRMRCVEAWSMVVPWIGFELGKLIKFAEPNSNARYVAFQTLYDPEQMPGQKDRFIGGGLKYPYVEGLRLDEAMNPLALLTVGVYGKTLPPQNGAPLRLITPWKYGFKGIKSIVHIRLVRDQPPTTWNQSAPNEYGFYANVNPHVDHPRWSQATERFIGSGGILDVKRQPTLLFNGYAEQVASLYRGLDLRENF.

Residues 1 to 43 constitute a signal peptide (tat-type signal); sequence MSKQRKLTEADVTPESVFYQRRKVLQALGITAASLALPHNAQA. Residues Asn87, 90-91, Cys145, Thr180, Asn232, Arg237, and 248-250 each bind Mo-molybdopterin; these read YE and GIK.

This sequence belongs to the MsrP family. In terms of assembly, heterodimer of a catalytic subunit (MsrP) and a heme-binding subunit (MsrQ). Requires Mo-molybdopterin as cofactor. Post-translationally, predicted to be exported by the Tat system. The position of the signal peptide cleavage has not been experimentally proven.

The protein localises to the periplasm. The catalysed reaction is L-methionyl-[protein] + a quinone + H2O = L-methionyl-(S)-S-oxide-[protein] + a quinol. The enzyme catalyses L-methionyl-[protein] + a quinone + H2O = L-methionyl-(R)-S-oxide-[protein] + a quinol. In terms of biological role, part of the MsrPQ system that repairs oxidized periplasmic proteins containing methionine sulfoxide residues (Met-O), using respiratory chain electrons. Thus protects these proteins from oxidative-stress damage caused by reactive species of oxygen and chlorine generated by the host defense mechanisms. MsrPQ is essential for the maintenance of envelope integrity under bleach stress, rescuing a wide series of structurally unrelated periplasmic proteins from methionine oxidation. The catalytic subunit MsrP is non-stereospecific, being able to reduce both (R-) and (S-) diastereoisomers of methionine sulfoxide. The sequence is that of Protein-methionine-sulfoxide reductase catalytic subunit MsrP from Serratia proteamaculans (strain 568).